The following is a 221-amino-acid chain: MLDVVKGNLIVSCQALSDEPLHSSFIMGRMAIAAKQGGAAAIRAQGVNDINEIKEVTKLPIIGIIKRNYDDSEIYITPTMKEVDELLKTDCEMIALDATKRKRPNGENVKDLVDAIHAKGRLAMADISTLEEGIEAEKLGFDCVSTTLSGYTPYSKQSNSVDFELLEELVKTVKIPVICEGRINTPEELKKALDLGAYSAVVGGAITRPQQITKRFTDILK.

This sequence belongs to the NanE family.

It catalyses the reaction an N-acyl-D-glucosamine 6-phosphate = an N-acyl-D-mannosamine 6-phosphate. It participates in amino-sugar metabolism; N-acetylneuraminate degradation; D-fructose 6-phosphate from N-acetylneuraminate: step 3/5. In terms of biological role, converts N-acetylmannosamine-6-phosphate (ManNAc-6-P) to N-acetylglucosamine-6-phosphate (GlcNAc-6-P). This Clostridium perfringens (strain ATCC 13124 / DSM 756 / JCM 1290 / NCIMB 6125 / NCTC 8237 / Type A) protein is Putative N-acetylmannosamine-6-phosphate 2-epimerase.